Reading from the N-terminus, the 542-residue chain is Gamma-terpinene synthase 1 (542 aa).

Positions 295 and 299 each coordinate Mn(2+). The DDXXD motif motif lies at 295–299 (DDVYD). Homodimerization stretches follow at residues 301-307 (YDTLDEL) and 373-410 (EAKW…FTLP). Mn(2+)-binding residues include D439 and E447.

The protein belongs to the terpene synthase family. Homodimer. Requires Mn(2+) as cofactor. Mg(2+) is required as a cofactor. As to expression, mostly expressed in flowers and, to a lower extent, in leaves, especially in glandular trichomes.

It carries out the reaction (2E)-geranyl diphosphate = gamma-terpinene + diphosphate. The enzyme catalyses (2E)-geranyl diphosphate = alpha-terpinene + diphosphate. Its pathway is secondary metabolite biosynthesis; terpenoid biosynthesis. Its function is as follows. Involved in the biosynthesis of phenolic monoterpenes natural products thymol and carvacrol which have a broad range of biological activities acting as antimicrobial compounds, insecticides, antioxidants and pharmaceutical agents. Monoterpene synthase which catalyzes the conversion of geranyl diphosphate (GPP) to gamma-terpinene and the minor products alpha-thujene, alpha-terpinene, myrcene, sabinene, (+)-R-limonene, alpha-pinene and alpha-phellandrene. This chain is Gamma-terpinene synthase 1, found in Thymus vulgaris (Thyme).